A 1838-amino-acid polypeptide reads, in one-letter code: Lysine-specific demethylase 5 (1838 aa).

The tract at residues 1–150 (MSAKTEADNT…SSNKFDQGKN (150 aa)) is disordered. Positions 15–31 (SGGGGVGSGTSSGGGAS) are enriched in gly residues. Over residues 45–56 (RNSTGNGTNSGS) the composition is skewed to low complexity. A compositionally biased stretch (polar residues) spans 136 to 145 (HTQPHSSNKF). The region spanning 161-202 (CPVFRPTTEEFKNPLAYISKIRSIAEKCGIAKILPPATWSPP) is the JmjN domain. The region spanning 226–316 (TRVKLNFLDQ…ILHPFEVYTS (91 aa)) is the ARID domain. Positions 321–333 (GPTPTSSGSGSTP) are enriched in low complexity. Disordered regions lie at residues 321-380 (GPTP…GLSG) and 416-437 (GSPL…KGGE). Threonine 323 is subject to Phosphothreonine. Polar residues-rich tracts occupy residues 351–361 (TRQQIAPPNET), 369–380 (FGNSNASCGLSG), and 416–430 (GSPL…TRGA). The segment at 448–498 (KYICHICNRGDVEESMLLCDGCDDSYHTFCLLPPLTSIPKGEWLCPRCVVE) adopts a PHD-type 1 zinc-finger fold. Positions 591 to 757 (EYAESSWNLN…MGRECVNHYS (167 aa)) constitute a JmjC domain. 3 residues coordinate Fe cation: histidine 637, aspartate 640, and histidine 725. Positions 960 to 1049 (VRTRSDHNQE…LRIELQQLDL (90 aa)) form a coiled coil. A PHD-type 2 zinc finger spans residues 1293 to 1354 (DMFCLCKSEF…KWLCPSCVRS (62 aa)). Residues 1401-1462 (SSPDVSAAQE…SDADDDDDED (62 aa)) are disordered. Positions 1407–1417 (AAQEAIMAQQQ) are enriched in low complexity. Residues serine 1422 and serine 1433 each carry the phosphoserine modification. Positions 1453–1462 (SDADDDDDED) are enriched in acidic residues. Serine 1474 bears the Phosphoserine mark. A disordered region spans residues 1548–1751 (YMQRQRQQHT…QRSQQAAQED (204 aa)). Low complexity-rich tracts occupy residues 1576–1595 (NSPN…SNSG), 1624–1650 (GKKG…PGAD), 1658–1667 (ANGGNTNSST), 1674–1683 (SATTTPTPGS), and 1692–1736 (STTA…ATGG). Residues serine 1635 and serine 1640 each carry the phosphoserine modification. The PHD-type 3 zinc-finger motif lies at 1753 to 1808 (EEECRAENCHKPTGREVDWVQCDGGCNEWFHMYCVGLNRSQIKPDDDYICIRCTKT). The segment at 1814–1838 (QGSGHSMSVASTTTPGKQRAVQSAR) is disordered.

Belongs to the JARID1 histone demethylase family. In terms of assembly, interacts with Myc. Part of a complex containing Lid, Myc and Ash2. Requires Fe(2+) as cofactor.

Its subcellular location is the nucleus. The enzyme catalyses N(6),N(6),N(6)-trimethyl-L-lysyl(4)-[histone H3] + 3 2-oxoglutarate + 3 O2 = L-lysyl(4)-[histone H3] + 3 formaldehyde + 3 succinate + 3 CO2. With respect to regulation, inhibited by Myc. Functionally, histone demethylase that specifically demethylates 'Lys-4' of histone H3, thereby playing a central role in histone code. Does not demethylate histone H3 'Lys-9', H3 'Lys-27', H3 'Lys-36', H3 'Lys-79' or H4 'Lys-20'. Specifically demethylates trimethylated H3 'Lys-4'. Required for the correct regulation of homeotic genes during development. Plays a role in the regulation of the circadian rhythm and in maintaining the normal periodicity of the circadian clock. Regulates the expression of clock-controlled genes including tim, per and cry. The polypeptide is Lysine-specific demethylase 5 (Drosophila melanogaster (Fruit fly)).